A 381-amino-acid chain; its full sequence is MSKRDFYEVLGVSRDASERDIKKAYKRLAMKFHPDRNQGDESAADKFKEVKEAYEILTDPQKKAAYDQYGHAAFEQGGGGFGGGFGGGGADFGDIFGDVFGDIFGGGRRGGGHARPQRGADLRYNMELSLEEAVRGVSKEIEVPTLVHCDTCEGTGAKKGTSAETCGTCHGHGQVQMRQGFFAVQQTCPTCHGKGKIIKDPCNVCHGQGRKQKTKTLNVKIPAGVDTGDRIRLSGEGEAGERGAPAGDLYVQVHVREHHIFEREGNNLYCEVPVSFAMAALGGEVEVPTLDGRVNLKVPSETQTGRMFRMRGKGVKGVRGGAIGDLIVKLVVETPVNLSSRQKELLKEFEESCCGEAATKHKPKSEGFFNGVKKFFDDLTS.

Residues 5–70 (DFYEVLGVSR…QKKAAYDQYG (66 aa)) form the J domain. The CR-type zinc finger occupies 136–214 (GVSKEIEVPT…CHGQGRKQKT (79 aa)). Positions 149, 152, 166, 169, 188, 191, 202, and 205 each coordinate Zn(2+). CXXCXGXG motif repeat units lie at residues 149–156 (CDTCEGTG), 166–173 (CGTCHGHG), 188–195 (CPTCHGKG), and 202–209 (CNVCHGQG).

This sequence belongs to the DnaJ family. In terms of assembly, homodimer. It depends on Zn(2+) as a cofactor.

The protein resides in the cytoplasm. Its function is as follows. Participates actively in the response to hyperosmotic and heat shock by preventing the aggregation of stress-denatured proteins and by disaggregating proteins, also in an autonomous, DnaK-independent fashion. Unfolded proteins bind initially to DnaJ; upon interaction with the DnaJ-bound protein, DnaK hydrolyzes its bound ATP, resulting in the formation of a stable complex. GrpE releases ADP from DnaK; ATP binding to DnaK triggers the release of the substrate protein, thus completing the reaction cycle. Several rounds of ATP-dependent interactions between DnaJ, DnaK and GrpE are required for fully efficient folding. Also involved, together with DnaK and GrpE, in the DNA replication of plasmids through activation of initiation proteins. The polypeptide is Chaperone protein DnaJ (Vibrio vulnificus (strain CMCP6)).